Consider the following 522-residue polypeptide: BTB/POZ domain-containing protein 3 (522 aa).

Positions 25–44 are disordered; it reads RSKKSSKKANTSSSSSNSSK. Residues 32 to 44 are compositionally biased toward low complexity; that stretch reads KANTSSSSSNSSK. Residues 120-190 form the BTB domain; the sequence is ADVHFVVGPP…IYCDEIDLAA (71 aa). The region spanning 235–300 is the BACK domain; the sequence is FEEPDLTQRC…NWAEVECQRQ (66 aa).

It localises to the cytoplasm. It is found in the cytosol. Its subcellular location is the nucleus. Its function is as follows. Acts as a key regulator of dendritic field orientation during development of sensory cortex. Also directs dendrites toward active axon terminals when ectopically expressed. This Homo sapiens (Human) protein is BTB/POZ domain-containing protein 3 (BTBD3).